The primary structure comprises 133 residues: C-C motif chemokine 21a (133 aa).

The N-terminal stretch at Met1–Gly23 is a signal peptide. 3 cysteine pairs are disulfide-bonded: Cys31-Cys57, Cys32-Cys75, and Cys103-Cys122. The segment at Leu86–Gly133 is disordered. A C-terminal basic extension region spans residues Lys98–Gly133. Residues Arg104–Cys122 are compositionally biased toward basic residues.

This sequence belongs to the intercrine beta (chemokine CC) family. In terms of assembly, binds to CCR7 and to CXCR3. Interacts with PDPN; relocalizes PDPN to the basolateral membrane. Interacts with GPR174. As to expression, expressed strongly in lung, spleen, thymus, peripheral and mesentric lymph nodes. Also expressed in the testis, kidney, liver, and heart.

The protein resides in the secreted. Functionally, inhibits hemopoiesis and stimulates chemotaxis. Chemotactic in vitro for thymocytes and activated T-cells, but not for B-cells, macrophages, or neutrophils. Potent mesangial cell chemoattractant. Shows preferential activity towards naive T-cells. May play a role in mediating homing of lymphocytes to secondary lymphoid organs. This Mus musculus (Mouse) protein is C-C motif chemokine 21a (Ccl21a).